A 222-amino-acid polypeptide reads, in one-letter code: FCS-Like Zinc finger 13 (222 aa).

Residues 149–192 (EFLSSCCLCKKKLQGKDIYMYKGEMGFCSAECRSVQIMNDERQE) form an FLZ-type zinc finger.

It belongs to the FLZ family. As to quaternary structure, interacts with KIN10 and KIN11 via its FLZ-type zinc finger domain. Interacts with KINB1, KINB2, KINB3 and SNF4 via its N-terminal part.

The protein localises to the nucleus. It is found in the cytoplasm. Functionally, may act as an adapter to facilitate the interaction of SnRK1 complex with effector proteins, conferring tissue- and stimulus-type specific differences in the SnRK1 regulation pathway. The polypeptide is FCS-Like Zinc finger 13 (Arabidopsis thaliana (Mouse-ear cress)).